We begin with the raw amino-acid sequence, 192 residues long: Adenylate kinase (192 aa).

10-18 (GVPGVGGTT) contacts ATP.

It belongs to the archaeal adenylate kinase family. In terms of assembly, monomer.

It is found in the cytoplasm. It carries out the reaction AMP + ATP = 2 ADP. This chain is Adenylate kinase (adkA), found in Methanotorris igneus (Methanococcus igneus).